We begin with the raw amino-acid sequence, 463 residues long: Mitochondrial distribution and morphology protein 10 (463 aa).

The protein belongs to the MDM10 family. In terms of assembly, component of the ER-mitochondria encounter structure (ERMES) or MDM complex, composed of MMM1, MDM10, MDM12 and MDM34. Associates with the mitochondrial outer membrane sorting assembly machinery SAM(core) complex.

It is found in the mitochondrion outer membrane. In terms of biological role, component of the ERMES/MDM complex, which serves as a molecular tether to connect the endoplasmic reticulum and mitochondria. Components of this complex are involved in the control of mitochondrial shape and protein biogenesis and may function in phospholipid exchange. MDM10 is involved in the late assembly steps of the general translocase of the mitochondrial outer membrane (TOM complex). Functions in the TOM40-specific route of the assembly of outer membrane beta-barrel proteins, including the association of TOM40 with the receptor TOM22 and small TOM proteins. Can associate with the SAM(core) complex as well as the MDM12-MMM1 complex, both involved in late steps of the major beta-barrel assembly pathway, that is responsible for biogenesis of all outer membrane beta-barrel proteins. May act as a switch that shuttles between both complexes and channels precursor proteins into the TOM40-specific pathway. Plays a role in mitochondrial morphology and in the inheritance of mitochondria. The sequence is that of Mitochondrial distribution and morphology protein 10 from Candida dubliniensis (strain CD36 / ATCC MYA-646 / CBS 7987 / NCPF 3949 / NRRL Y-17841) (Yeast).